Reading from the N-terminus, the 435-residue chain is Putative pyridoxal-phosphate dependent protein F13B12.4 (435 aa).

The N-terminal stretch at 1 to 18 is a signal peptide; it reads MKLLLLALFLSISASCLA. Residue Asn-79 is glycosylated (N-linked (GlcNAc...) asparagine). Lys-89 is modified (N6-(pyridoxal phosphate)lysine). 235–239 lines the pyridoxal 5'-phosphate pocket; the sequence is GTGGT. Asn-277 carries N-linked (GlcNAc...) asparagine glycosylation. Position 342 (Ser-342) interacts with pyridoxal 5'-phosphate.

Belongs to the cysteine synthase/cystathionine beta-synthase family. Highly divergent.

In Caenorhabditis elegans, this protein is Putative pyridoxal-phosphate dependent protein F13B12.4.